The following is a 361-amino-acid chain: MSSVVIYCRSGFENDAAAEITFHAAEQGFAGYVKAKPNTGYVIYECFDAQHGDEIIKKVDFKNMVFARQWFAGTLIENMPVEDRVGAVVEAAKDFTLCSELRVETPDTNEGKELLTFCKKISTPLKKALEKRNIVLREPKANRPVMHVLFLTNNTAYVGYSYSFNNSPFFMGILRLRMPSDAPSRSTLKLDEAFNVFIPEQQRESRVAAGMRSVDLGACPGGWTYQLVRRGMFVSAIDNGPMNDDLMQTGQVKHFRADGFKYRPEKRNITWLVCDMVEKPTKVTSLMIDWAVNAYAKELIFNLKLPMKKRFDSVYECLSMIRAELEKYGISYELQAKHLYHDREEVTVHLNVTKVPQSLYS.

S-adenosyl-L-methionine is bound by residues Ser186, 219 to 222 (CPGG), Asp238, Asp258, and Asp275. The active-site Proton acceptor is the Lys304.

Belongs to the class I-like SAM-binding methyltransferase superfamily. RNA methyltransferase RlmE family. RlmM subfamily. Monomer.

The protein localises to the cytoplasm. It carries out the reaction cytidine(2498) in 23S rRNA + S-adenosyl-L-methionine = 2'-O-methylcytidine(2498) in 23S rRNA + S-adenosyl-L-homocysteine + H(+). Its function is as follows. Catalyzes the 2'-O-methylation at nucleotide C2498 in 23S rRNA. The protein is Ribosomal RNA large subunit methyltransferase M of Pseudoalteromonas translucida (strain TAC 125).